The primary structure comprises 499 residues: Probable alpha-L-arabinofuranosidase B (499 aa).

Positions 1-17 are cleaved as a signal peptide; it reads MFSRRNLLALGLAATVS. The tract at residues 18–335 is catalytic; sequence AGPCDIYEAG…ENIVAAKYVV (318 aa). Intrachain disulfides connect Cys-21-Cys-31, Cys-81-Cys-86, and Cys-176-Cys-177. Asn-83 carries an N-linked (GlcNAc...) asparagine glycan. N-linked (GlcNAc...) asparagine glycosylation occurs at Asn-202. Residue Asp-219 participates in substrate binding. Glu-221 acts as the Nucleophile in catalysis. Residues Asn-222, Asn-223, Gly-296, His-416, Asn-418, Phe-419, Asp-435, His-463, Glu-465, Leu-468, and Asp-488 each contribute to the substrate site. The tract at residues 336-499 is ABD; that stretch reads GSLVSGPSFT…SFEIETAFAS (164 aa). A disulfide bond links Cys-401 and Cys-439.

This sequence belongs to the glycosyl hydrolase 54 family.

It localises to the secreted. The enzyme catalyses Hydrolysis of terminal non-reducing alpha-L-arabinofuranoside residues in alpha-L-arabinosides.. The protein operates within glycan metabolism; L-arabinan degradation. Its function is as follows. Alpha-L-arabinofuranosidase involved in the degradation of arabinoxylan, a major component of plant hemicellulose. Able to hydrolyze 1,5-, 1,3- and 1,2-alpha-linkages not only in L-arabinofuranosyl oligosaccharides, but also in polysaccharides containing terminal non-reducing L-arabinofuranoses in side chains, like L-arabinan, arabinogalactan and arabinoxylan. The sequence is that of Probable alpha-L-arabinofuranosidase B (abfB) from Aspergillus awamori (Black koji mold).